The following is a 147-amino-acid chain: Hemoglobin subunit epsilon (147 aa).

The Globin domain maps to 3–147; sequence HFTAEEKATI…VATALAHKYH (145 aa). Phosphoserine is present on residues Ser14 and Ser51. Positions 64 and 93 each coordinate heme b.

This sequence belongs to the globin family. As to quaternary structure, heterotetramer of two alpha chains and two epsilon chains in early embryonic hemoglobin Gower-2; two zeta chains and two epsilon chains in early embryonic hemoglobin Gower-1. In terms of tissue distribution, red blood cells.

Its function is as follows. The epsilon chain is a beta-type chain of early mammalian embryonic hemoglobin. The chain is Hemoglobin subunit epsilon (HBE1) from Daubentonia madagascariensis (Aye-aye).